The sequence spans 378 residues: Ribosomal RNA large subunit methyltransferase G (378 aa).

Belongs to the methyltransferase superfamily. RlmG family.

The protein resides in the cytoplasm. The enzyme catalyses guanosine(1835) in 23S rRNA + S-adenosyl-L-methionine = N(2)-methylguanosine(1835) in 23S rRNA + S-adenosyl-L-homocysteine + H(+). Its function is as follows. Specifically methylates the guanine in position 1835 (m2G1835) of 23S rRNA. The chain is Ribosomal RNA large subunit methyltransferase G from Shigella dysenteriae serotype 1 (strain Sd197).